The primary structure comprises 374 residues: Spore germination protein GerLB (374 aa).

Helical transmembrane passes span 16–36, 44–64, 86–106, 122–142, 149–169, 192–212, 227–247, 279–301, 313–333, and 341–361; these read IGFA…PRDI, DGWI…WFVT, PVAY…TAYE, TPIQ…IAGS, LNVL…LLNI, VKNS…AVLL, AVMV…SVFT, FFTT…ASLL, IFIF…SSLN, and YLAW…LIVY.

The protein belongs to the amino acid-polyamine-organocation (APC) superfamily. Spore germination protein (SGP) (TC 2.A.3.9) family.

It localises to the membrane. Contributes to the L-alanine germination response. The chain is Spore germination protein GerLB (gerLB) from Bacillus cereus.